The primary structure comprises 303 residues: Sulfate adenylyltransferase subunit 2 (303 aa).

The protein belongs to the PAPS reductase family. CysD subfamily. Heterodimer composed of CysD, the smaller subunit, and CysN.

It carries out the reaction sulfate + ATP + H(+) = adenosine 5'-phosphosulfate + diphosphate. It participates in sulfur metabolism; hydrogen sulfide biosynthesis; sulfite from sulfate: step 1/3. Functionally, with CysN forms the ATP sulfurylase (ATPS) that catalyzes the adenylation of sulfate producing adenosine 5'-phosphosulfate (APS) and diphosphate, the first enzymatic step in sulfur assimilation pathway. APS synthesis involves the formation of a high-energy phosphoric-sulfuric acid anhydride bond driven by GTP hydrolysis by CysN coupled to ATP hydrolysis by CysD. The protein is Sulfate adenylyltransferase subunit 2 of Aliarcobacter butzleri (strain RM4018) (Arcobacter butzleri).